The chain runs to 5233 residues: MVGLLNPLKYGDHFYELYTNSTRRKMQHDRKVLTKRKSRKDKSAAAMAAAAAAAVLEGNAGAGGLVNPLDPPLVKEQLMILPSFPVAHIELDPNASKFAVFSAIRSTVLEAETRYSLFQEGGAPSGQSGSNQKKWSNNVNSACCMMCAHSCMISNLLDCSCHAHMAMHGAVGPGNAGPGGPVGVLVDGRIPAPVPVVVGGPGLPAEKRPRRDSANSDADSDTEEPTEREPVYATVPLIVGAGLRSLFELIADARHVHPLLCTKALKALLDVIQGQQPESFKLEPEELINPLYDLLLDLATMPAALNSATGAEANWSAMACAALLGLCIARGDTGKMLKAIAAMLMTPRQLSAQIVQLPVVLATLQHTVISAALNKPTRPDFHSHGVPHNSLIDEFPVKLPPLSTGAPITSPAMACDGVFVYLLYGGTLLKIGTGFGGSYKGHIYAQNEDFSHERSAWLGYSGGQLYFRRTCRRSAGDQLQMVGLDTLAIKAMSPLSMLHMREGLNYVLFTDDDSLHAICSNRDDTLVVKKLNLYHNSYNIDPPPFELPLQLARKKFRTLGYAAFEDELLNQYQIQRIQSAHNSFEPKLPAPCRDADVDVMGMACGKEFGLVRASNGRVYYYGKSAALGLKCVGRTPTLKLTELVISKAANIVHVAVGHDGIHALLVNDDGTVFFAGTARRGEDGDSSKNRRQPKAVKPKKMTKIDGHVVVHAACNNGTSAFVTKTGKLIMYGKDTAHCDAMGFVSELLEQHVTKVALGKAHCVALNAKGQLFSFGLNNKGQCGRIFNKLQPVKDVPPFASSSTAAACFASLLPLDKRLKLDFSTLCDYDDHNLVQGQCRVCVICRECTGYNVSCVSALNVPLDQRLAGSICPCGHGDAGCAKCGLCAACIALQDSDEAKTELKPPPSDVQQRQQRSKTLIMRRKERKGELETGAAGGGAATPTDLDKDPPRVAPLAPQLLQLTSSSPVVQVACGLHHTVVLTLAGEVYTFGSNQYGQLGSGDLQPVSGPVRVQVPGAISQVAAGSNHTVLLTSKGMVYTFGNYQKGQLGRLPSDYGLKPPPQDDDSPVGAGSDGGAGGSPTVAPVGMPGPERSQSPANVQPSGSKEMPPLLPVLTQRQKFLWNCSPGAVFGLGPCYGKKVTWIGANGDQTFIKIDESLITAQMLPKMHVVANKKTILLIPSIPLSFHTLSINRRDGSCTAHYRGQTNFVKLMQAQPEQQQPEINSNLDVAVTPVADSPAHASTSSLLAALTGTATAGVPINEQMSRSMHEARNQIFEEQLPEVGSSAAAAAVAAPGTPVSAGSVPRSRRGGKQGTSSPEPIPSPPQLAFTMDPTYNVLWVFDGAARKLRCHNVVASDINDSDANAATYRSLLSPELSLPDRVDSRVARSQASLNLLACLDILTSAQDNIPGCFEQPLLKQTQQTAETQAGEFQVVNRFDNFGGGWGYSGHSVEAIRFSADTDIVICGFGMFGGRGEYSCKLKLFDLGGDGGGYEKEGILISETKEVPYECGARSKHHILLPKPVSAVAGRWYLVWARIAGPSSDCGSCGQASVTTEDQVVFSFKSSKKANNGTDVNSGQIPAILYRLVTQDCKQTPAQMDADPVQRISRAFANSVSRECFESLVVLLSWSWDCFKLQLREERDRSRPLQLQQSLQYLGYVIKSCLRLLRKYTIEIYPQRNSSTSVATGGGSNAAHGSGVVTTAKSVQSKPNKDKNTPRVVGNAGVMAKYFGDPSTSVAPAMISSASSGGAPSTSASAAVAPGSGTPVTRKTNMENIQLAECIGNVRALLIGIFCDDIFKDIATDEGYELSLEILDECHLSFVACFDAFYPTSSLKWNCLCDLLAQMDRGALHSRLLSAILAGLCSPSVKLRATFSLLSAAGNERQSIISPSDNSGLPMLSSTDAHPYPVLVEQMIYRTQQEKSDFLSNSWTFKDVLVRLLDIIASPIRSRIEAIYSRSLGSLGYPGGKDCVNQGLIDNCCHLLARVLAEIVYQTAMGEYDKLFMPPRTLHSTGARFARCDVSRTWNTGNFGPDAIAFAVDRPGVAIAGAMVYSGSGSYDYQLELLYDNTADLQPQHKWETLESVSGSYDQDAVHNDLAEIKFDHPVHIKENARYALRLCSQGARTCSGDAGMPAVRGPCGAQFHFYACDLSFNGTTPARGQLPCILYYSTPMKQDGHSASGRTGDGSNVATHLEDRIMLLGPHEVSTRDTALQIAADITKKCTELLILARNAMAASCSPSDNSSNHTQTIDSEHNITPIEEHMDINWANNSRTAALPTAIDPQLSTARDLGKRIESFSKGLMETLKFDKRSTNPFEMEIEIGATEVEESADLRNGQSQSVSQSQSQSQSVPINGNERTADFEFAEQSAQQSMPQHLHSDSEEAPLEVAGMAAGGGVSVADGSGGVAGVGSQAAAVQLLEVFNLAASNMFHTLLPLVYAHIANLACSDPKSSVQILGLIKEILPHIAALNQLHVSKDQRQPEPAIFATQTSGSGNSNSSSTTSNHYCVVESDHPYKSASISSYRVEFPPCVQWLTIEFDPQCGTAQLEDYLLLSIPMRPASQAPPVPHVDDYLEQADNNVNGAGDRRRNTGGGIAGSGAAPNTHQRSASVQLTMASCCRSPGCGNAPGSAAAPSSMPLRSQDPNDREWIVVKKFNTASTWLHNVLILPGNCVEFSLETASLYAQDPHNNRYGFKCLVVGYDNPTSINASNSCLIRLEQELAYLGGMCSANLMKKELNLPDDKDVEDMSGIEETINTHHTLLSKGFALSEPQLTVHQALESYLPIGSQSNERQFLKDFISGAPGSSGARLAAWLQPESRLDPNKCELNTITEPLRYGWPSQVTVTIRDQYGDAVLVPELKVEIKAIPTGSGPNGSATGTGTSCTSVAEVSAPGPNLWMRRASRDTWGWGGMAPPPRINYEPTVKDKMVFKAITFMKPYANYSFEELRYASPVQTRVTELLNAKDMEDGTFSVQWTPSSVGAYCLAVTIDGIPLEEVYRVDVKEGILPPPTQRNSAQRRPQAPSKLRRFQARHSSGLRIRSHPTLQSEQVGVVRVGGVISFIDEIENDDGVWLRLSTESIRQHCTMGWYPTEAWCLQFNQHLARMLLQPVTDKEVNPVRKGVGAEEDVEEQPPVTPSASGEASPEPEPDPSPVLSPAKTKPGRFLSGHQSTNPFLYPAKHADLAEREAQVQEEREKEEEQVDDEDADDREPEQEALPAVELLPAHIGSAIAGVVGGGAIKLQALQKWFKGDAVDGPQPLTPSHSPPLAGVSVRELVRAMGGQDSPRGNGNRSQQEQDPEFSLASMRRPNYSASQTAALLSTPKHTPKRSAVVASETSGLEDELSLLQITTTTTGQGEQQSELQLATTSTASSASKRNPMGPIKRAMPPSFAESIRAVFAALLWHEGVVHDAMACASFLKFHPGLPKEGATVVTRRGESGDPRLQLSREQKAQQRHSVEVANAGNYLNIRPSTLETLTKSGNCSLHNRSKYRKNLLSGGGGAINSGDDTAQKLQALPEMVSVLPPALRCLVYLWEQICSGCVQIVQSNALEQREPRLLSPGSRDLNGDADTEGKEGKNSDQASAGEKDLGRKCKRKKKDDGSWCEICELFLPMPVTYHMRIAHPGCGKSAKGKGYNSVGIFCEGWAGNCGEGGKGASSWFLMCDPCRDRYLASCRSANNINSAARQLESSAAEGNELNLFGVKSTTLIANAEVYTTMRENATFLLELCSSSSSASGAAGSLAATSSSSKRSPQQMSVVAMPVVIEHQLGNSDLKPSTSRCSRMARLSGSKFCPGVGSGAFRKSFVGGPPTAPENVWLAPESFACLECLGTAGHEDLPYEMFGLGPNSNDNGYDRPLSEISYESCEPNNYDMLSGSLAPGTTAAASVGGGNLSKFHRSYSMGQGWASLAQHNHPPPHHPQQQHHQQQQMNLQLQQHQAPPVDGQPKVVYRRRNNSTSEGDGSLLICYPSEHLRRLVPQKLLASVSVMQTASGEGTGKDHATGTLGLDQSAGQNGGGNLLLTRPAMAFITQKHELDRLRAAMRRSLRIAACRIYALQALNWLLRSVTQGVCLHDLMWWFVSSLNPTGGHQPVERGEEASEPALEHPVAYTQISGRFAHLITQSLHVFLQSVADLTLHLPLGSPLQRVAIQCFGIRFRQADHQFLHSSHVFGNISKILSKSDEQNDAMAVSTILKPDCDVEHNQVHSVATGGSSGAGARLLCYTDLAGMFEVTVSSRPAMAESLTDNSTETFWESDEEDRNKCKIIELSLTKLNYACRYLLVHIDNSRDIQNKVLNVVFYAGQSLGDTNIIKSADVDPKACSWISAKICDDSCTHFRLELHGPENTLRVRQIKLLGLPIGGAVGSDDSSDHKHQPHLRLSHASRIQQQICEAETLRVFRLITGQVFGKLISNVSSDLVPPDSAGIGPPSGGAASTSLLADSLDLREHMVGILFSRSKLSHLQKQVIVHIVHAIRKEAQRAKEDWELANLAHVLKQSPQQQTAPALAASASCESTPERSRAPDTYCFEMLSMVLALSGSVVGRSYLSQQHGLLRDLLGLLHTGSDRVQRQVTALLRRILPEITPESFAELLGVQRLPPADYSIAHQSASDFDMSRLGLLDIFLAVIAKSLQLQVKVKTTVASTGPSGSGGVSGSSSGNGGAVLKAGQQEKTPAFVRLWSSLDLSVQQLRSRPPTGEPGTTDPFQFDALPPRKESKRNLNQRWFLNGVISTKQAESIISLIRDLASGKLSEKWSQITKAAIAESVLNLTRLEEIYRSPEHCTKTSTLWLALASLCVLERDHVEKLSSGQWSKLCDTRPLCSNHDDGETAAIIQCETCGSLCGDCDRFLHLNRKTRSHKRTVCKEEEEAIRVELHESCGRTKLFWLLALADSKTLKAMVEFRDGSHTIISGPQEAVGRCRFCGLTGNSGLLEIGNVCADAQCQEYAANSCLKTKPCGHACGGVTGERKCLPCLQHVCHTRENELAEELRDPKLTQDADDMCMICFVEALSCAPSIHLECGHVFHYHCCKAVLEKRWSGPRITFGFSLCPICKADIQHPLLSDILEPINGLKQDVKRKALMRIKYEGVVKDTDSKNVNMTQLAMDRYAYYVCFKCQKAYYGGEARCDAEIGEKFDPEELVCGGCSDVARAQMCPKHGTDFLEYKCRYCCSVAVFFCFGTTHFCDTCHDDFQRLTNIPKVKLPQCPAGPKAKQLLGDECPLHVMHPPTGEEFALGCGVCRNAQTF.

Residues 197–230 (VVGGPGLPAEKRPRRDSANSDADSDTEEPTEREP) form a disordered region. The span at 205-214 (AEKRPRRDSA) shows a compositional bias: basic and acidic residues. A phosphoserine mark is found at Ser213 and Ser216. 3 RCC1 repeats span residues 615 to 666 (NGRV…ALLV), 669 to 724 (DGTV…FVTK), and 768 to 818 (KGQL…DKRL). The disordered stretch occupies residues 680-700 (RGEDGDSSKNRRQPKAVKPKK). Residues 689–700 (NRRQPKAVKPKK) are compositionally biased toward basic residues. The segment at 900 to 950 (TELKPPPSDVQQRQQRSKTLIMRRKERKGELETGAAGGGAATPTDLDKDPP) is disordered. Polar residues predominate over residues 908-917 (DVQQRQQRSK). RCC1 repeat units follow at residues 931-983 (ETGA…VLTL), 984-1033 (AGEV…LLTS), and 1035-1084 (GMVY…TVAP). 2 disordered regions span residues 1051 to 1109 (LPSD…EMPP) and 1287 to 1327 (AAAA…PPQL). Over residues 1092-1103 (RSQSPANVQPSG) the composition is skewed to polar residues. The segment covering 1287-1302 (AAAAAVAAPGTPVSAG) has biased composition (low complexity). Residues 1436–1587 (NRFDNFGGGW…GQIPAILYRL (152 aa)) form a PHR domain 1 region. The tract at residues 1681–1718 (SSTSVATGGGSNAAHGSGVVTTAKSVQSKPNKDKNTPR) is disordered. Over residues 1699–1709 (VVTTAKSVQSK) the composition is skewed to polar residues. Positions 2014–2169 (ARFARCDVSR…GQLPCILYYS (156 aa)) are PHR domain 2. 2 disordered regions span residues 2329–2353 (SADL…VPIN) and 2580–2604 (NGAG…NTHQ). The segment covering 2336 to 2350 (QSQSVSQSQSQSQSV) has biased composition (low complexity). Residues 2885 to 4082 (AEVSAPGPNL…FVSSLNPTGG (1198 aa)) form a required for interaction with Rae1 region. A Filamin repeat occupies 2906–3000 (WGGMAPPPRI…LEEVYRVDVK (95 aa)). 6 disordered regions span residues 3005–3024 (PPPT…SKLR), 3117–3210 (KGVG…EPEQ), 3277–3333 (GGQD…ASET), 3348–3378 (TTTG…PMGP), 3551–3587 (PRLL…DLGR), and 3901–3936 (ASLA…APPV). Residues 3176–3191 (KHADLAEREAQVQEER) are compositionally biased toward basic and acidic residues. A compositionally biased stretch (acidic residues) spans 3192-3210 (EKEEEQVDDEDADDREPEQ). Residues 3282–3292 (PRGNGNRSQQE) are compositionally biased toward polar residues. Over residues 3348-3371 (TTTGQGEQQSELQLATTSTASSAS) the composition is skewed to low complexity. Low complexity predominate over residues 3917 to 3932 (QHHQQQQMNLQLQQHQ). In terms of domain architecture, DOC spans 4195–4374 (HNQVHSVATG…KHQPHLRLSH (180 aa)). Disordered regions lie at residues 4633 to 4655 (ASTG…GAVL) and 4680 to 4702 (LRSR…ALPP). Over residues 4638–4652 (SGSGGVSGSSSGNGG) the composition is skewed to gly residues. Zn(2+) is bound by residues Cys4991, Cys4994, Cys5009, His5011, His5014, Cys5017, Cys5038, Cys5041, Cys5101, and Cys5104. The RING-type; atypical zinc-finger motif lies at 4991-5042 (CMICFVEALSCAPSIHLECGHVFHYHCCKAVLEKRWSGPRITFGFSLCPICK). The segment at 5096 to 5231 (YAYYVCFKCQ…LGCGVCRNAQ (136 aa)) is tandem cysteine domain. The active site involves Cys5115. Zn(2+)-binding residues include Cys5130, Cys5133, Cys5142, His5145, Cys5154, Cys5157, and Cys5158. Cys5165 is an active-site residue. The Zn(2+) site is built by Cys5172, Cys5175, Cys5193, Cys5207, His5213, Cys5224, and Cys5227.

This sequence belongs to the RING-Cys relay (RCR) family. In terms of assembly, component of an E3 ubiquitin ligase complex composed of hiw, Rae1 and Fsn. Interacts with Rae1; the interaction with Rae1 may protect hiw from autophagy-mediated degradation. As to expression, express throughout the nervous system. Stage 13 embryos show expression in the central nervous system (CNS) at the longitudinal axon tracts around which the synaptic neuropil forms. Expression outside the CNS starts at stage 16 in presynaptic terminals at the periactive zone which surround the active zone. Expression at neuromuscular junctions (NMJ) and in the CNS is also seen in third instar larvae (at protein level).

It is found in the synapse. It localises to the cell projection. The protein localises to the axon. It carries out the reaction [E2 ubiquitin-conjugating enzyme]-S-ubiquitinyl-L-cysteine + [acceptor protein]-L-threonine = [E2 ubiquitin-conjugating enzyme]-L-cysteine + [acceptor protein]-3-O-ubiquitinyl-L-threonine.. The protein operates within protein modification; protein ubiquitination. Its function is as follows. Atypical E3 ubiquitin-protein ligase which specifically mediates ubiquitination of threonine and serine residues on target proteins, instead of ubiquitinating lysine residues. Shows esterification activity towards both threonine and serine, with a preference for threonine, and acts via two essential catalytic cysteine residues that relay ubiquitin to its substrate via thioester intermediates. Required in the presynaptic motoneuron to down-regulate the levels of wnd and restrain synaptic terminal growth at the neuromuscular junction (NMJ) together with Rae1 and Fsn. The polypeptide is E3 ubiquitin-protein ligase highwire (Drosophila melanogaster (Fruit fly)).